The sequence spans 579 residues: V-type ATP synthase alpha chain (579 aa).

Position 227–234 (227–234) interacts with ATP; it reads GGFGTGKT.

Belongs to the ATPase alpha/beta chains family.

It carries out the reaction ATP + H2O + 4 H(+)(in) = ADP + phosphate + 5 H(+)(out). Its function is as follows. Produces ATP from ADP in the presence of a proton gradient across the membrane. The V-type alpha chain is a catalytic subunit. In Anaeromyxobacter dehalogenans (strain 2CP-1 / ATCC BAA-258), this protein is V-type ATP synthase alpha chain.